The chain runs to 1593 residues: DNA-directed RNA polymerase subunit beta' (1593 aa).

Zn(2+) is bound by residues cysteine 74, cysteine 76, cysteine 89, and cysteine 92. Residues aspartate 648, aspartate 650, and aspartate 652 each coordinate Mg(2+). The Zn(2+) site is built by cysteine 1026, cysteine 1100, cysteine 1107, and cysteine 1110.

Belongs to the RNA polymerase beta' chain family. The RNAP catalytic core consists of 2 alpha, 1 beta, 1 beta' and 1 omega subunit. When a sigma factor is associated with the core the holoenzyme is formed, which can initiate transcription. The cofactor is Mg(2+). Requires Zn(2+) as cofactor.

It carries out the reaction RNA(n) + a ribonucleoside 5'-triphosphate = RNA(n+1) + diphosphate. In terms of biological role, DNA-dependent RNA polymerase catalyzes the transcription of DNA into RNA using the four ribonucleoside triphosphates as substrates. This Endomicrobium trichonymphae protein is DNA-directed RNA polymerase subunit beta'.